Reading from the N-terminus, the 461-residue chain is Glycine--tRNA ligase (461 aa).

Substrate-binding residues include arginine 100 and glutamate 163. ATP contacts are provided by residues 195 to 197 (RNE), 205 to 210 (FRTREF), 282 to 283 (EL), and 326 to 329 (GLGR). Substrate is bound at residue 210-214 (FEQME). 322-326 (EPAAG) is a substrate binding site.

It belongs to the class-II aminoacyl-tRNA synthetase family. In terms of assembly, homodimer.

The protein resides in the cytoplasm. The catalysed reaction is tRNA(Gly) + glycine + ATP = glycyl-tRNA(Gly) + AMP + diphosphate. In terms of biological role, catalyzes the attachment of glycine to tRNA(Gly). In Corynebacterium efficiens (strain DSM 44549 / YS-314 / AJ 12310 / JCM 11189 / NBRC 100395), this protein is Glycine--tRNA ligase.